The primary structure comprises 1065 residues: Alpha-L-arabinofuranosidase (1065 aa).

The N-terminal stretch at 1-26 is a signal peptide; the sequence is MKHWKKMAASLIAISTMVAVVPTTYA. One can recognise a BIG2 domain in the interval 277-346; it reads VVNNKLTLIE…TTELGGVKAE (70 aa). Residues 997 to 1031 form a disordered region; the sequence is KAPTNPGEGDGDKGDGNKPTTPTTGDKTNVNKPGS. A compositionally biased stretch (polar residues) spans 1014-1031; the sequence is KPTTPTTGDKTNVNKPGS. The chain crosses the membrane as a helical span at residues 1040–1060; it reads VLGLGGAVVALAIAGISLTLW.

Belongs to the glycosyl hydrolase 43 family.

It is found in the cell membrane. The enzyme catalyses Hydrolysis of terminal non-reducing alpha-L-arabinofuranoside residues in alpha-L-arabinosides.. In terms of biological role, involved in the type II arabinogalactan (AG) side chains degradation. Releases arabinofuranose (Araf) from alpha-1,3-Araf-substituted beta-1,6-galactooligosaccharides. Can use radish root AGP, larch AG and arabinan. Shows weaker activity with gum arabic and arabinoxylan. This chain is Alpha-L-arabinofuranosidase, found in Bifidobacterium longum subsp. longum (strain ATCC 15707 / DSM 20219 / JCM 1217 / NCTC 11818 / E194b).